The primary structure comprises 49 residues: Large ribosomal subunit protein bL33 (49 aa).

The protein belongs to the bacterial ribosomal protein bL33 family.

The sequence is that of Large ribosomal subunit protein bL33 from Alkaliphilus metalliredigens (strain QYMF).